The chain runs to 116 residues: MSGQMFKVEIVTRPANFEKLKQELGKIGVTSLTFSNVHGCGLQKAHTELYRGVKIESNVYERLKIEIVVSKVPVDQVTETAKRVLKTGSPGDGKIFVYEISNTINIRTGEEGPEAL.

This sequence belongs to the P(II) protein family. In terms of assembly, needs to interact with NrgA in order to localize correctly to the membrane.

It is found in the cell membrane. Its function is as follows. Required for full induction of the nrgAB operon under conditions of ammonium limitation. The sequence is that of Nitrogen regulatory PII-like protein (nrgB) from Bacillus subtilis (strain 168).